The chain runs to 316 residues: tRNA dimethylallyltransferase (316 aa).

17-24 (GPTASGKT) is a binding site for ATP. Residue 19–24 (TASGKT) coordinates substrate. Interaction with substrate tRNA stretches follow at residues 42-45 (DSAL), 166-170 (QRLSR), 247-252 (RCVGYR), and 280-287 (KRQITWLR).

The protein belongs to the IPP transferase family. Monomer. The cofactor is Mg(2+).

It catalyses the reaction adenosine(37) in tRNA + dimethylallyl diphosphate = N(6)-dimethylallyladenosine(37) in tRNA + diphosphate. Functionally, catalyzes the transfer of a dimethylallyl group onto the adenine at position 37 in tRNAs that read codons beginning with uridine, leading to the formation of N6-(dimethylallyl)adenosine (i(6)A). The sequence is that of tRNA dimethylallyltransferase from Shigella boydii serotype 18 (strain CDC 3083-94 / BS512).